We begin with the raw amino-acid sequence, 50 residues long: Protein HokE (50 aa).

The chain crosses the membrane as a helical span at residues 5–25 (YALVAVIVLCLTVLGFTLLVG).

It belongs to the Hok/Gef family.

Its subcellular location is the cell inner membrane. In terms of biological role, toxic component of a type I toxin-antitoxin (TA) system. When overexpressed kills cells within minutes; causes collapse of the transmembrane potential and arrest of respiration. Its toxic effect is probably neutralized by an antisense antitoxin Sok RNA. This Escherichia coli O157:H7 protein is Protein HokE (hokE).